The following is a 171-amino-acid chain: Small ribosomal subunit protein uS5 (171 aa).

Positions 16–79 (LIEKIVFINR…ERARKDMALV (64 aa)) constitute an S5 DRBM domain.

Belongs to the universal ribosomal protein uS5 family. As to quaternary structure, part of the 30S ribosomal subunit. Contacts proteins S4 and S8.

In terms of biological role, with S4 and S12 plays an important role in translational accuracy. Its function is as follows. Located at the back of the 30S subunit body where it stabilizes the conformation of the head with respect to the body. The chain is Small ribosomal subunit protein uS5 from Desulfotalea psychrophila (strain LSv54 / DSM 12343).